We begin with the raw amino-acid sequence, 185 residues long: Calcium and integrin-binding family member 4 (185 aa).

EF-hand domains are found at residues 62 to 95 (RVNPFRDRICRVFSHDNVFSFEDVLGMASVFSEQ), 97 to 132 (CPSLKIEYAFRIYDFNENGFIDEEDLEEIVLRLLKS), and 138 to 174 (DLLMDVMHHVLSESDLDNDSMLSFSEFEHAMAKSPDF). Asp110, Asn112, Asn114, and Asp121 together coordinate Ca(2+).

As to quaternary structure, interacts with ITGA2B (via C-terminus cytoplasmic tail region); the interaction is stabilized/increased in a calcium- and magnesium-dependent manner. Expressed weakly in megakaryocytes and endothelial cells.

The polypeptide is Calcium and integrin-binding family member 4 (Cib4) (Mus musculus (Mouse)).